A 141-amino-acid chain; its full sequence is MALERTLSIIKPDAVAKNVIGEIYARFEKAGLKVVAAKYKQLSRREAEGFYAVHRERPFFNALVEFMISGPVMIQALEGENAVLAHRDLLGATNPKEAAPGTIRADFAESIDANAAHGSDSVENAAIEIAYFFAATEVVSR.

Positions 11, 59, 87, 93, 104, and 114 each coordinate ATP. The active-site Pros-phosphohistidine intermediate is the His-117.

The protein belongs to the NDK family. In terms of assembly, homotetramer. The cofactor is Mg(2+).

The protein resides in the cytoplasm. It catalyses the reaction a 2'-deoxyribonucleoside 5'-diphosphate + ATP = a 2'-deoxyribonucleoside 5'-triphosphate + ADP. The catalysed reaction is a ribonucleoside 5'-diphosphate + ATP = a ribonucleoside 5'-triphosphate + ADP. In terms of biological role, major role in the synthesis of nucleoside triphosphates other than ATP. The ATP gamma phosphate is transferred to the NDP beta phosphate via a ping-pong mechanism, using a phosphorylated active-site intermediate. This Stenotrophomonas maltophilia (strain R551-3) protein is Nucleoside diphosphate kinase.